The following is a 48-amino-acid chain: Large ribosomal subunit protein bL33B (48 aa).

This sequence belongs to the bacterial ribosomal protein bL33 family.

The polypeptide is Large ribosomal subunit protein bL33B (Streptococcus thermophilus (strain CNRZ 1066)).